A 388-amino-acid polypeptide reads, in one-letter code: 3-oxo-tetronate kinase (388 aa).

Residues serine 258 and 360–363 (GGET) each bind ATP.

This sequence belongs to the four-carbon acid sugar kinase family.

It carries out the reaction 3-dehydro-L-erythronate + ATP = 3-dehydro-4-O-phospho-L-erythronate + ADP + H(+). The enzyme catalyses 3-dehydro-D-erythronate + ATP = 3-dehydro-4-O-phospho-D-erythronate + ADP + H(+). Functionally, catalyzes the ATP-dependent phosphorylation of 3-oxo-tetronate to 3-oxo-tetronate 4-phosphate. This Escherichia coli (strain K12) protein is 3-oxo-tetronate kinase.